A 184-amino-acid polypeptide reads, in one-letter code: MSIKLGYLFKLPSYKTSSISPEVIVDLEKFLNLCEGSCSQCNTPFCVDVGPRNAIIQLPNGADVLNLNPNFQAIFECCSKNSLTGVQIFGMYNDGTYELRSFCPVHGVNEDPANGSGAGSVGVFFALNNPSIISSDFAHLLFNQGKILGRNALIRVAIKLSANGLYDIHVGGGSKICISGTAEI.

The protein belongs to the PhzF family.

It localises to the cytoplasm. The protein resides in the nucleus. This is an uncharacterized protein from Schizosaccharomyces pombe (strain 972 / ATCC 24843) (Fission yeast).